We begin with the raw amino-acid sequence, 541 residues long: Calcium-dependent protein kinase 26 (541 aa).

Residues 1–11 (MGQCCTGGGKA) show a composition bias toward gly residues. The tract at residues 1-74 (MGQCCTGGGK…AGPIGEVLER (74 aa)) is disordered. G2 is lipidated: N-myristoyl glycine. The span at 38 to 67 (AKQQPCSPAAKAAATEAAAAASSSKKPAGP) shows a compositional bias: low complexity. A Protein kinase domain is found at 83–341 (YSIGKELGRG…AFQVLNHPWI (259 aa)). Residues 89 to 97 (LGRGQFGVT) and K112 contribute to the ATP site. The active-site Proton acceptor is D207. The tract at residues 347–377 (APDVPLDNVVLNRLKQFRAMNQFKKAALRII) is autoinhibitory domain. 4 EF-hand domains span residues 384 to 419 (EEIKGLKEMFKNIDKDNSGTITLEELKNGLAKQGTK), 420 to 455 (FSDNEIEQLMEAADADGNGIIDYEEFVTATVHMNKM), 456 to 491 (DREEHLYTAFQYFDKDNSGYITKEELEQALKEQGLY), and 493 to 526 (ANEIKDVITDADSNNDGRIDYSEFVAMMRKGSGC). Residues D397, D399, S401, T403, E408, D433, D435, N437, E444, D469, D471, S473, Y475, E480, D504, N506, D508, R510, and E515 each contribute to the Ca(2+) site.

This sequence belongs to the protein kinase superfamily. Ser/Thr protein kinase family. CDPK subfamily. In terms of tissue distribution, specifically expressed in heading panicles, spikelets and mature pollen grains. Not expressed in vegetative tissues.

The protein localises to the membrane. The enzyme catalyses L-seryl-[protein] + ATP = O-phospho-L-seryl-[protein] + ADP + H(+). It carries out the reaction L-threonyl-[protein] + ATP = O-phospho-L-threonyl-[protein] + ADP + H(+). With respect to regulation, activated by calcium. Autophosphorylation may play an important role in the regulation of the kinase activity. In terms of biological role, may play a role in signal transduction pathways that involve calcium as a second messenger. This is Calcium-dependent protein kinase 26 from Oryza sativa subsp. japonica (Rice).